The following is a 485-amino-acid chain: Glutamate--tRNA ligase (485 aa).

Residues 11 to 21 (PSPTGLLHIGN) carry the 'HIGH' region motif. Residues 255-259 (KLSKR) carry the 'KMSKS' region motif. Residue Lys258 participates in ATP binding.

The protein belongs to the class-I aminoacyl-tRNA synthetase family. Glutamate--tRNA ligase type 1 subfamily. As to quaternary structure, monomer.

The protein resides in the cytoplasm. The catalysed reaction is tRNA(Glu) + L-glutamate + ATP = L-glutamyl-tRNA(Glu) + AMP + diphosphate. Functionally, catalyzes the attachment of glutamate to tRNA(Glu) in a two-step reaction: glutamate is first activated by ATP to form Glu-AMP and then transferred to the acceptor end of tRNA(Glu). This Streptococcus gordonii (strain Challis / ATCC 35105 / BCRC 15272 / CH1 / DL1 / V288) protein is Glutamate--tRNA ligase.